The chain runs to 157 residues: SsrA-binding protein (157 aa).

The tract at residues 134 to 157 (HDKRESEKKRDWGREKGRLLRARG) is disordered. Positions 135–151 (DKRESEKKRDWGREKGR) are enriched in basic and acidic residues.

It belongs to the SmpB family.

It localises to the cytoplasm. Functionally, required for rescue of stalled ribosomes mediated by trans-translation. Binds to transfer-messenger RNA (tmRNA), required for stable association of tmRNA with ribosomes. tmRNA and SmpB together mimic tRNA shape, replacing the anticodon stem-loop with SmpB. tmRNA is encoded by the ssrA gene; the 2 termini fold to resemble tRNA(Ala) and it encodes a 'tag peptide', a short internal open reading frame. During trans-translation Ala-aminoacylated tmRNA acts like a tRNA, entering the A-site of stalled ribosomes, displacing the stalled mRNA. The ribosome then switches to translate the ORF on the tmRNA; the nascent peptide is terminated with the 'tag peptide' encoded by the tmRNA and targeted for degradation. The ribosome is freed to recommence translation, which seems to be the essential function of trans-translation. The polypeptide is SsrA-binding protein (Nitrobacter hamburgensis (strain DSM 10229 / NCIMB 13809 / X14)).